The chain runs to 145 residues: 3-dehydroquinate dehydratase (145 aa).

Tyr24 (proton acceptor) is an active-site residue. Substrate contacts are provided by Asn75, His81, and Asp88. His101 functions as the Proton donor in the catalytic mechanism. Residues 102–103 (IS) and Arg112 contribute to the substrate site.

Belongs to the type-II 3-dehydroquinase family. As to quaternary structure, homododecamer.

It catalyses the reaction 3-dehydroquinate = 3-dehydroshikimate + H2O. Its pathway is metabolic intermediate biosynthesis; chorismate biosynthesis; chorismate from D-erythrose 4-phosphate and phosphoenolpyruvate: step 3/7. Functionally, catalyzes a trans-dehydration via an enolate intermediate. The chain is 3-dehydroquinate dehydratase (aroQ) from Corynebacterium glutamicum (strain ATCC 13032 / DSM 20300 / JCM 1318 / BCRC 11384 / CCUG 27702 / LMG 3730 / NBRC 12168 / NCIMB 10025 / NRRL B-2784 / 534).